Consider the following 675-residue polypeptide: Methionine--tRNA ligase (675 aa).

The 'HIGH' region signature appears at 15 to 25; the sequence is PYANGPIHLGH. Zn(2+)-binding residues include Cys146, Cys149, Cys159, and Cys162. The 'KMSKS' region motif lies at 332-336; it reads KMSKS. Lys335 lines the ATP pocket. Residues 573 to 675 enclose the tRNA-binding domain; that stretch reads DFAKVDMRVA…SGAQPGMQVK (103 aa).

The protein belongs to the class-I aminoacyl-tRNA synthetase family. MetG type 1 subfamily. Homodimer. Zn(2+) serves as cofactor.

It localises to the cytoplasm. It catalyses the reaction tRNA(Met) + L-methionine + ATP = L-methionyl-tRNA(Met) + AMP + diphosphate. Functionally, is required not only for elongation of protein synthesis but also for the initiation of all mRNA translation through initiator tRNA(fMet) aminoacylation. The chain is Methionine--tRNA ligase from Photorhabdus laumondii subsp. laumondii (strain DSM 15139 / CIP 105565 / TT01) (Photorhabdus luminescens subsp. laumondii).